A 324-amino-acid chain; its full sequence is Heat-inducible transcription repressor HrcA (324 aa).

It belongs to the HrcA family.

Negative regulator of class I heat shock genes (grpE-dnaK-dnaJ and groELS operons). Prevents heat-shock induction of these operons. The polypeptide is Heat-inducible transcription repressor HrcA (Synechococcus sp. (strain CC9902)).